Consider the following 344-residue polypeptide: Arginine N-succinyltransferase (344 aa).

Leu125 is a succinyl-CoA binding site. Residue His229 is the Proton donor of the active site.

This sequence belongs to the arginine N-succinyltransferase family.

The enzyme catalyses succinyl-CoA + L-arginine = N(2)-succinyl-L-arginine + CoA + H(+). Its pathway is amino-acid degradation; L-arginine degradation via AST pathway; L-glutamate and succinate from L-arginine: step 1/5. In terms of biological role, catalyzes the transfer of succinyl-CoA to arginine to produce N(2)-succinylarginine. The sequence is that of Arginine N-succinyltransferase from Escherichia coli O157:H7.